We begin with the raw amino-acid sequence, 946 residues long: Villin-4 (946 aa).

Gelsolin-like repeat units lie at residues Asn28–Lys109, Val152–Lys219, Leu274–Phe339, and Glu641–Phe715. Disordered regions lie at residues Ala744–Arg783 and Thr846–Asp902. Residues Gln765–His777 are compositionally biased toward polar residues. Residues Ser874–Asn883 are compositionally biased toward acidic residues. The 66-residue stretch at Asp881–Phe946 folds into the HP domain.

The protein belongs to the villin/gelsolin family.

The protein resides in the cytoplasm. It localises to the cytoskeleton. Its function is as follows. Ca(2+)-regulated actin-binding protein. Binds actin microfilaments (MFs). Involved in actin filament bundling, severing and capping. Caps the barbed end of actin filaments and is able to sever them in a calcium-dependent manner. This chain is Villin-4, found in Oryza sativa subsp. indica (Rice).